The sequence spans 285 residues: NADPH-dependent 7-cyano-7-deazaguanine reductase (285 aa).

A substrate-binding site is contributed by 91–93 (IES). 93 to 94 (SK) is a binding site for NADPH. The Thioimide intermediate role is filled by Cys192. Asp199 functions as the Proton donor in the catalytic mechanism. 231–232 (HE) is a substrate binding site. NADPH is bound at residue 260-261 (RG).

The protein belongs to the GTP cyclohydrolase I family. QueF type 2 subfamily. As to quaternary structure, homodimer.

The protein localises to the cytoplasm. The catalysed reaction is 7-aminomethyl-7-carbaguanine + 2 NADP(+) = 7-cyano-7-deazaguanine + 2 NADPH + 3 H(+). Its pathway is tRNA modification; tRNA-queuosine biosynthesis. Functionally, catalyzes the NADPH-dependent reduction of 7-cyano-7-deazaguanine (preQ0) to 7-aminomethyl-7-deazaguanine (preQ1). The chain is NADPH-dependent 7-cyano-7-deazaguanine reductase from Psychromonas ingrahamii (strain DSM 17664 / CCUG 51855 / 37).